The sequence spans 271 residues: Phosphate import ATP-binding protein PstB 1 (271 aa).

The 242-residue stretch at 25–266 (LTVEHLNLYY…PTQRRTEDYI (242 aa)) folds into the ABC transporter domain. Residue 57–64 (GPSGCGKS) participates in ATP binding.

The protein belongs to the ABC transporter superfamily. Phosphate importer (TC 3.A.1.7) family. As to quaternary structure, the complex is composed of two ATP-binding proteins (PstB), two transmembrane proteins (PstC and PstA) and a solute-binding protein (PstS).

It localises to the cell inner membrane. The catalysed reaction is phosphate(out) + ATP + H2O = ADP + 2 phosphate(in) + H(+). Part of the ABC transporter complex PstSACB involved in phosphate import. Responsible for energy coupling to the transport system. The chain is Phosphate import ATP-binding protein PstB 1 from Pectobacterium atrosepticum (strain SCRI 1043 / ATCC BAA-672) (Erwinia carotovora subsp. atroseptica).